A 237-amino-acid chain; its full sequence is Intracellular ribonuclease LX (237 aa).

The propeptide occupies 1–24 (MMKSQKKLLIKIIVVQCLLVLCVT). Gln-36 serves as a coordination point for RNA. Cys-42 and Cys-48 are joined by a disulfide. RNA contacts are provided by residues His-63, Phe-113, 116–117 (HE), and 120–121 (KH). His-63 functions as the Proton donor in the catalytic mechanism. Cystine bridges form between Cys-78–Cys-124, Cys-183–Cys-219, and Cys-199–Cys-210. Glu-117 is an active-site residue. Residue His-121 is the Proton acceptor of the active site.

It belongs to the RNase T2 family.

The protein resides in the cytoplasm. It carries out the reaction a ribonucleotidyl-ribonucleotide-RNA + H2O = a 3'-end 3'-phospho-ribonucleotide-RNA + a 5'-end dephospho-ribonucleoside-RNA + H(+). This is Intracellular ribonuclease LX (RNALX) from Solanum lycopersicum (Tomato).